Here is a 1022-residue protein sequence, read N- to C-terminus: Antigenic heat-stable 120 kDa protein (1022 aa).

Disordered stretches follow at residues 1-41 (MSKD…QTTT) and 355-403 (GQSK…PQSQ). Positions 19 to 34 (EYTEEQKQTLEQEQKE) are enriched in basic and acidic residues. Composition is skewed to polar residues over residues 355–380 (GQSKEQPLITPQQTTSSSVEPPQYKQ) and 387–403 (PTNQPLQPETSQMPQSQ).

The protein resides in the cytoplasm. This chain is Antigenic heat-stable 120 kDa protein (sca4), found in Rickettsia conorii (strain ATCC VR-613 / Malish 7).